The chain runs to 44 residues: Benzaldehyde dehydrogenase [NAD(+)] II (44 aa).

This sequence belongs to the aldehyde dehydrogenase family.

The catalysed reaction is benzaldehyde + NAD(+) + H2O = benzoate + NADH + 2 H(+). In Acinetobacter guillouiae (Acinetobacter genomosp. 11), this protein is Benzaldehyde dehydrogenase [NAD(+)] II.